The sequence spans 276 residues: Large ribosomal subunit protein uL2 (276 aa).

Residues Asn-212 to Lys-276 are disordered. Residues Tyr-257–Lys-276 show a composition bias toward basic residues.

It belongs to the universal ribosomal protein uL2 family. In terms of assembly, part of the 50S ribosomal subunit. Forms a bridge to the 30S subunit in the 70S ribosome.

In terms of biological role, one of the primary rRNA binding proteins. Required for association of the 30S and 50S subunits to form the 70S ribosome, for tRNA binding and peptide bond formation. It has been suggested to have peptidyltransferase activity; this is somewhat controversial. Makes several contacts with the 16S rRNA in the 70S ribosome. The polypeptide is Large ribosomal subunit protein uL2 (Helicobacter acinonychis (strain Sheeba)).